Consider the following 345-residue polypeptide: Eukaryotic translation initiation factor 3 subunit F (345 aa).

The 137-residue stretch at 30 to 166 (VVIQPQAIFS…TRAYISAPVG (137 aa)) folds into the MPN domain. Residues 308 to 345 (GGESGGAESGAQRGQRGGKGGRGGQQRNQERGAEEARA) form a disordered region. The segment covering 322–331 (QRGGKGGRGG) has biased composition (gly residues). Residues 335–345 (NQERGAEEARA) are compositionally biased toward basic and acidic residues.

The protein belongs to the eIF-3 subunit F family. In terms of assembly, component of the eukaryotic translation initiation factor 3 (eIF-3) complex.

The protein localises to the cytoplasm. Its function is as follows. Component of the eukaryotic translation initiation factor 3 (eIF-3) complex, which is involved in protein synthesis of a specialized repertoire of mRNAs and, together with other initiation factors, stimulates binding of mRNA and methionyl-tRNAi to the 40S ribosome. The eIF-3 complex specifically targets and initiates translation of a subset of mRNAs involved in cell proliferation. The sequence is that of Eukaryotic translation initiation factor 3 subunit F from Aspergillus clavatus (strain ATCC 1007 / CBS 513.65 / DSM 816 / NCTC 3887 / NRRL 1 / QM 1276 / 107).